Reading from the N-terminus, the 526-residue chain is UDP-N-acetylmuramoyl-L-alanyl-D-glutamate--2,6-diaminopimelate ligase (526 aa).

UDP-N-acetyl-alpha-D-muramoyl-L-alanyl-D-glutamate contacts are provided by Leu-48 and Ser-50. 136–142 is an ATP binding site; the sequence is GTSGKTT. UDP-N-acetyl-alpha-D-muramoyl-L-alanyl-D-glutamate is bound by residues 178–179, Ser-205, and Arg-213; that span reads TT. Residue Lys-245 is modified to N6-carboxylysine. Residues Arg-408, 432–435, Gly-490, and Glu-494 each bind meso-2,6-diaminopimelate; that span reads DNPR. The Meso-diaminopimelate recognition motif motif lies at 432 to 435; sequence DNPR.

The protein belongs to the MurCDEF family. MurE subfamily. Requires Mg(2+) as cofactor. Carboxylation is probably crucial for Mg(2+) binding and, consequently, for the gamma-phosphate positioning of ATP.

The protein localises to the cytoplasm. It catalyses the reaction UDP-N-acetyl-alpha-D-muramoyl-L-alanyl-D-glutamate + meso-2,6-diaminopimelate + ATP = UDP-N-acetyl-alpha-D-muramoyl-L-alanyl-gamma-D-glutamyl-meso-2,6-diaminopimelate + ADP + phosphate + H(+). Its pathway is cell wall biogenesis; peptidoglycan biosynthesis. Its function is as follows. Catalyzes the addition of meso-diaminopimelic acid to the nucleotide precursor UDP-N-acetylmuramoyl-L-alanyl-D-glutamate (UMAG) in the biosynthesis of bacterial cell-wall peptidoglycan. This Corynebacterium efficiens (strain DSM 44549 / YS-314 / AJ 12310 / JCM 11189 / NBRC 100395) protein is UDP-N-acetylmuramoyl-L-alanyl-D-glutamate--2,6-diaminopimelate ligase.